The primary structure comprises 239 residues: Tetratricopeptide repeat protein 9B (239 aa).

2 disordered regions span residues 1–57 (MQRG…LGAA) and 99–126 (QGAR…SEEQ). Residues Ser7 and Ser27 each carry the phosphoserine modification. Residues 16 to 31 (PEPPPRPPPALSPPGS) show a composition bias toward pro residues. One copy of the TPR 1 repeat lies at 65-99 (AVAFKAEGQRCYREKKFREAIGKYHRALLQLKAAQ). Over residues 106–116 (LPAPAPGPTSS) the composition is skewed to pro residues. One copy of the TPR 2 repeat lies at 171 to 204 (FKATYRAGIAFYHLGDYARALRYLQEARSREPTD).

It belongs to the TTC9 family.

This Homo sapiens (Human) protein is Tetratricopeptide repeat protein 9B (TTC9B).